The chain runs to 407 residues: MGFVLPASFPGASSITTGGSCLRSKQYAKNYYASSYVTTLWHKKGKIQKEYCAVIFSRHNLKQHYKVNEGGSTSKECEKKYVVNAISEQSFEYEPQARDPKNIWGSVNDALDTFYKFCRPYAIFSVVLGATFKSLVAVERLSDLSLAFFIGWLQVVVAVICIHIFDVGLNQLCDIEIDKINKPDLPLASGNLSFRNVVIITASSLILGLGFAWIVGSWPLFWTVFICCMFAAAYNVDLPLLRWKKYPVLTAISFIANVAVTRSLGFFLHMQTCVFKRPTTFPRPLIFCTAIVSIYAIVIALFKDIPDMEGDEKFGIQSLSLRLGPKRVFWICVSLLEMAYGVTILVGATSPILWSKIITVLGHAILASVLWYHAKSTDLTSNVVLQSFYMFIWKLHTAEYCLIPLFR.

The N-terminal 23 residues, 1-23 (MGFVLPASFPGASSITTGGSCLR), are a transit peptide targeting the chloroplast. The next 8 helical transmembrane spans lie at 117–137 (FCRP…SLVA), 145–165 (SLAF…IHIF), 206–226 (ILGL…TVFI), 248–268 (VLTA…GFFL), 285–305 (LIFC…FKDI), 328–348 (VFWI…LVGA), 352–372 (ILWS…VLWY), and 383–403 (VVLQ…YCLI).

This sequence belongs to the UbiA prenyltransferase family. Mg(2+) serves as cofactor. The cofactor is Mn(2+).

The protein localises to the plastid. It is found in the chloroplast membrane. The enzyme catalyses (2S)-naringenin + dimethylallyl diphosphate = sophoraflavanone B + diphosphate. Its function is as follows. Involved in the biosynthesis of sophoraflavanone G (SFG). Can use flavanones (naringenin, liquiritigenin and hesperetin) as substrates, but not flavonols or isoflavones. Shows a strict specificity for dimethylallyl diphosphate. The sequence is that of Naringenin 8-dimethylallyltransferase 2, chloroplastic (N8DT-2) from Sophora flavescens (Shrubby sophora).